Here is a 92-residue protein sequence, read N- to C-terminus: Small ribosomal subunit protein uS19 (92 aa).

This sequence belongs to the universal ribosomal protein uS19 family.

In terms of biological role, protein S19 forms a complex with S13 that binds strongly to the 16S ribosomal RNA. In Acholeplasma laidlawii (strain PG-8A), this protein is Small ribosomal subunit protein uS19.